A 420-amino-acid polypeptide reads, in one-letter code: UDP-N-acetylglucosamine 1-carboxyvinyltransferase (420 aa).

Residue 22-23 participates in phosphoenolpyruvate binding; that stretch reads KN. Arg-92 contacts UDP-N-acetyl-alpha-D-glucosamine. Cys-116 serves as the catalytic Proton donor. Cys-116 carries the 2-(S-cysteinyl)pyruvic acid O-phosphothioketal modification. UDP-N-acetyl-alpha-D-glucosamine-binding positions include 121 to 125, Asp-307, and Leu-329; that span reads RPIDL.

Belongs to the EPSP synthase family. MurA subfamily.

It localises to the cytoplasm. It catalyses the reaction phosphoenolpyruvate + UDP-N-acetyl-alpha-D-glucosamine = UDP-N-acetyl-3-O-(1-carboxyvinyl)-alpha-D-glucosamine + phosphate. It functions in the pathway cell wall biogenesis; peptidoglycan biosynthesis. Its function is as follows. Cell wall formation. Adds enolpyruvyl to UDP-N-acetylglucosamine. The sequence is that of UDP-N-acetylglucosamine 1-carboxyvinyltransferase from Nitratiruptor sp. (strain SB155-2).